Here is a 141-residue protein sequence, read N- to C-terminus: Large-conductance mechanosensitive channel (141 aa).

A run of 2 helical transmembrane segments spans residues 16–36 and 83–103; these read VVDL…VSSM and GNFI…FLMV.

This sequence belongs to the MscL family. Homopentamer.

Its subcellular location is the cell inner membrane. Channel that opens in response to stretch forces in the membrane lipid bilayer. May participate in the regulation of osmotic pressure changes within the cell. This chain is Large-conductance mechanosensitive channel, found in Cytophaga hutchinsonii (strain ATCC 33406 / DSM 1761 / CIP 103989 / NBRC 15051 / NCIMB 9469 / D465).